The following is a 156-amino-acid chain: 6,7-dimethyl-8-ribityllumazine synthase (156 aa).

5-amino-6-(D-ribitylamino)uracil-binding positions include Phe-22, 56–58, and 80–82; these read AFE and VVI. A (2S)-2-hydroxy-3-oxobutyl phosphate-binding site is contributed by 85 to 86; that stretch reads ST. His-88 functions as the Proton donor in the catalytic mechanism. Phe-113 serves as a coordination point for 5-amino-6-(D-ribitylamino)uracil. Arg-127 contacts (2S)-2-hydroxy-3-oxobutyl phosphate.

The protein belongs to the DMRL synthase family.

The enzyme catalyses (2S)-2-hydroxy-3-oxobutyl phosphate + 5-amino-6-(D-ribitylamino)uracil = 6,7-dimethyl-8-(1-D-ribityl)lumazine + phosphate + 2 H2O + H(+). It functions in the pathway cofactor biosynthesis; riboflavin biosynthesis; riboflavin from 2-hydroxy-3-oxobutyl phosphate and 5-amino-6-(D-ribitylamino)uracil: step 1/2. Catalyzes the formation of 6,7-dimethyl-8-ribityllumazine by condensation of 5-amino-6-(D-ribitylamino)uracil with 3,4-dihydroxy-2-butanone 4-phosphate. This is the penultimate step in the biosynthesis of riboflavin. This is 6,7-dimethyl-8-ribityllumazine synthase from Streptococcus agalactiae serotype Ia (strain ATCC 27591 / A909 / CDC SS700).